A 342-amino-acid polypeptide reads, in one-letter code: Holliday junction branch migration complex subunit RuvB (342 aa).

Residues 1–179 are large ATPase domain (RuvB-L); sequence MTNILSPEKI…FGIPMRLNFY (179 aa). Residues Ile18, Arg19, Gly60, Lys63, Thr64, Thr65, 126 to 128, Arg169, Tyr179, and Arg216 contribute to the ATP site; that span reads EDF. Thr64 is a Mg(2+) binding site. Positions 180–250 are small ATPAse domain (RuvB-S); the sequence is NTEELKKVLN…ISDFGLNRLE (71 aa). The head domain (RuvB-H) stretch occupies residues 253–342; it reads HIGLDSNDYR…HQFNIFNENE (90 aa). The DNA site is built by Arg289, Arg308, and Arg313.

This sequence belongs to the RuvB family. As to quaternary structure, homohexamer. Forms an RuvA(8)-RuvB(12)-Holliday junction (HJ) complex. HJ DNA is sandwiched between 2 RuvA tetramers; dsDNA enters through RuvA and exits via RuvB. An RuvB hexamer assembles on each DNA strand where it exits the tetramer. Each RuvB hexamer is contacted by two RuvA subunits (via domain III) on 2 adjacent RuvB subunits; this complex drives branch migration. In the full resolvosome a probable DNA-RuvA(4)-RuvB(12)-RuvC(2) complex forms which resolves the HJ.

It is found in the cytoplasm. It catalyses the reaction ATP + H2O = ADP + phosphate + H(+). The RuvA-RuvB-RuvC complex processes Holliday junction (HJ) DNA during genetic recombination and DNA repair, while the RuvA-RuvB complex plays an important role in the rescue of blocked DNA replication forks via replication fork reversal (RFR). RuvA specifically binds to HJ cruciform DNA, conferring on it an open structure. The RuvB hexamer acts as an ATP-dependent pump, pulling dsDNA into and through the RuvAB complex. RuvB forms 2 homohexamers on either side of HJ DNA bound by 1 or 2 RuvA tetramers; 4 subunits per hexamer contact DNA at a time. Coordinated motions by a converter formed by DNA-disengaged RuvB subunits stimulates ATP hydrolysis and nucleotide exchange. Immobilization of the converter enables RuvB to convert the ATP-contained energy into a lever motion, pulling 2 nucleotides of DNA out of the RuvA tetramer per ATP hydrolyzed, thus driving DNA branch migration. The RuvB motors rotate together with the DNA substrate, which together with the progressing nucleotide cycle form the mechanistic basis for DNA recombination by continuous HJ branch migration. Branch migration allows RuvC to scan DNA until it finds its consensus sequence, where it cleaves and resolves cruciform DNA. This is Holliday junction branch migration complex subunit RuvB from Rickettsia felis (strain ATCC VR-1525 / URRWXCal2) (Rickettsia azadi).